The sequence spans 423 residues: Histidine--tRNA ligase (423 aa).

It belongs to the class-II aminoacyl-tRNA synthetase family. In terms of assembly, homodimer.

It localises to the cytoplasm. The enzyme catalyses tRNA(His) + L-histidine + ATP = L-histidyl-tRNA(His) + AMP + diphosphate + H(+). The polypeptide is Histidine--tRNA ligase (Corynebacterium diphtheriae (strain ATCC 700971 / NCTC 13129 / Biotype gravis)).